A 179-amino-acid chain; its full sequence is Large ribosomal subunit protein uL6 (179 aa).

It belongs to the universal ribosomal protein uL6 family. In terms of assembly, part of the 50S ribosomal subunit.

In terms of biological role, this protein binds to the 23S rRNA, and is important in its secondary structure. It is located near the subunit interface in the base of the L7/L12 stalk, and near the tRNA binding site of the peptidyltransferase center. The protein is Large ribosomal subunit protein uL6 of Prochlorococcus marinus (strain MIT 9312).